The following is a 463-amino-acid chain: Sodium-coupled neutral amino acid transporter 7 (463 aa).

Residue serine 28 is modified to Phosphoserine. Transmembrane regions (helical) follow at residues 56 to 76 (AVFI…PAAF), 82 to 102 (VAAG…GLVI), 130 to 150 (LCEI…LIII), 179 to 199 (FTIS…KEIG), 206 to 226 (SLSV…YIWP), 240 to 260 (ASWM…QCHV), 283 to 303 (AAMV…FLTF), 320 to 340 (VAVA…YPIL), 372 to 392 (VLQT…IPDI), 396 to 416 (ISVI…LCLI), and 429 to 449 (ASWW…AFIF).

Belongs to the amino acid/polyamine transporter 2 family. As to quaternary structure, interacts with the mTORC1 complex; this interaction mediates the recruitment of mTORC1 to the lysosome and its subsequent activation.

It is found in the lysosome membrane. The protein resides in the cell projection. It localises to the axon. It catalyses the reaction L-asparagine(in) + Na(+)(in) = L-asparagine(out) + Na(+)(out). The enzyme catalyses L-glutamine(in) + Na(+)(in) = L-glutamine(out) + Na(+)(out). Its function is as follows. Symporter that selectively cotransports sodium ions and amino acids, such as L-glutamine and L-asparagine from the lysosome into the cytoplasm and may participates in mTORC1 activation. The transport activity requires an acidic lysosomal lumen. The protein is Sodium-coupled neutral amino acid transporter 7 of Rattus norvegicus (Rat).